We begin with the raw amino-acid sequence, 428 residues long: C4-dicarboxylate transport protein (428 aa).

Transmembrane regions (helical) follow at residues Ser-4–Gly-24, Leu-44–Met-64, Val-76–Val-96, Ile-142–Phe-162, Val-184–Met-204, Leu-222–Ala-242, Val-289–Leu-309, Ile-326–Val-346, and Ile-352–Ile-372.

Belongs to the dicarboxylate/amino acid:cation symporter (DAACS) (TC 2.A.23) family.

The protein localises to the cell inner membrane. Responsible for the transport of dicarboxylates such as succinate, fumarate, and malate from the periplasm across the membrane. The polypeptide is C4-dicarboxylate transport protein (Salmonella gallinarum (strain 287/91 / NCTC 13346)).